The following is a 591-amino-acid chain: MRSHYCGDVNKSHVGQEVTLVGWVNRSRDLGGVVFLDLRDREGLVQVVYDPDLPEVFNVASTLRAEFCVQVKGVVRARPDSQVNAQMKTGEIEVLGKELTIINSSEPLPLSLDNYQNNSEEQRLKYRYLDLRRPEMAQRLMFRAKVTSAVRRFLDSNGFLDIETPILTKATPEGARDYLVPSRTYKGQFFALPQSPQLFKQLLMMSGFDRYYQIVKCFRDEDLRADRQPEFTQIDIETSFMTSEQVMAKTEEMMRGLFLEMLNVDLGEFPRMTYNEAMRRFGSDKPDLRNPLELVDVADLLKEVEFAVFSGPANDEEGRVAALRIPGGASLSRKQIDDYTKFVGIYGAKGLAWMKLNDLTQGLEGIQSPVLKFLNEGIVNEIISRTGAQTGDIILFGADNATVVAESMGALRLKAGEDFNLLEGQWRPLWVVDFPMFEKINGSFHAVHHPFTAPRGVTPQELEANPANRVSDAYDMVLNGCELGGGSVRIHNQEMQSAVFRILGITDEEAKEKFGFLLEALRYGTPPHAGLAFGLDRIIMLMTGASSIRDVMAFPKTTTAACPLTNAPGFANPQQLAELGISVVKAAKTED.

Glu-173 contributes to the L-aspartate binding site. An aspartate region spans residues 197–200 (QLFK). Residue Arg-219 participates in L-aspartate binding. ATP is bound by residues 219–221 (RDE) and Gln-228. Residue His-448 participates in L-aspartate binding. Glu-482 provides a ligand contact to ATP. Arg-489 provides a ligand contact to L-aspartate. 534–537 (GLDR) contacts ATP.

Belongs to the class-II aminoacyl-tRNA synthetase family. Type 1 subfamily. Homodimer.

It localises to the cytoplasm. It carries out the reaction tRNA(Asp) + L-aspartate + ATP = L-aspartyl-tRNA(Asp) + AMP + diphosphate. Its function is as follows. Catalyzes the attachment of L-aspartate to tRNA(Asp) in a two-step reaction: L-aspartate is first activated by ATP to form Asp-AMP and then transferred to the acceptor end of tRNA(Asp). In Shewanella sp. (strain ANA-3), this protein is Aspartate--tRNA ligase.